The following is a 447-amino-acid chain: Beclin-1 (447 aa).

The BH3 motif lies at 105 to 124; sequence TMENLSRRLKVTSNLFDIMS. An interaction with BCL2 and BCL2L1 isoform Bcl-X(L) region spans residues 109–156; it reads LSRRLKVTSNLFDIMSGQTDIDHPLCEECTDTLLDHLDTQLNITENEC. Residues 140–214 adopt a coiled-coil conformation; that stretch reads TLLDHLDTQL…VAKELDEGRN (75 aa). The tract at residues 242 to 447 is evolutionary conserved domain (ECD); the sequence is DDLKSVDNQM…AWVSSQFYNR (206 aa). Lys399 participates in a covalent cross-link: Glycyl lysine isopeptide (Lys-Gly) (interchain with G-Cter in ubiquitin). Residues 422–447 form a required for membrane-association region; that stretch reads WTKALKFMLTNLKWGLAWVSSQFYNR.

The protein belongs to the beclin family. As to quaternary structure, component of the PI3K (PI3KC3/PI3K-III/class III phosphatidylinositol 3-kinase) complex. Interacts with the poly-Gln domain of ATXN3; the interaction causes deubiquitination at Lys-399 and stabilizes BECN1. Post-translationally, polyubiquitinated at Lys-399 with 'Lys-48'-linkages. 'Lys-48'-linked polyubiquitination of Lys-399 leads to degradation. Deubiquitinated by ATXN3, leading to stabilization.

It localises to the cytoplasm. The protein localises to the golgi apparatus. The protein resides in the trans-Golgi network membrane. It is found in the endosome membrane. Its subcellular location is the endoplasmic reticulum membrane. It localises to the mitochondrion membrane. The protein localises to the endosome. The protein resides in the cytoplasmic vesicle. It is found in the autophagosome. Plays a central role in autophagy. Acts as a core subunit of different PI3K complex forms that mediate formation of phosphatidylinositol 3-phosphate and are believed to play a role in multiple membrane trafficking pathways: PI3KC3-C1 is involved in initiation of autophagosomes and PI3KC3-C2 in maturation of autophagosomes and endocytosis. Involved in regulation of degradative endocytic trafficking and required for the abscission step in cytokinesis, probably in the context of PI3KC3-C2. Essential for the formation of PI3KC3-C2 but not PI3KC3-C1 PI3K complex forms. Involved in endocytosis including endosome formation in neuronal cells. The chain is Beclin-1 (becn1) from Danio rerio (Zebrafish).